Reading from the N-terminus, the 37-residue chain is Large ribosomal subunit protein bL36 (37 aa).

This sequence belongs to the bacterial ribosomal protein bL36 family.

The polypeptide is Large ribosomal subunit protein bL36 (Alkalilimnicola ehrlichii (strain ATCC BAA-1101 / DSM 17681 / MLHE-1)).